Consider the following 508-residue polypeptide: Cytochrome P450 monooxygenase lepD (508 aa).

A helical membrane pass occupies residues I22–F42. Residues N53 and N416 are each glycosylated (N-linked (GlcNAc...) asparagine). Residue C454 participates in heme binding.

The protein belongs to the cytochrome P450 family. It depends on heme as a cofactor.

It localises to the membrane. In terms of biological role, cytochrome P450 monooxygenase; part of the gene cluster 23 that mediates the biosynthesis of a family of 2-pyridones known as leporins. The hybrid PKS-NRPS synthetase lepA and the enoyl reductase lepG are responsible for fusion of phenylalanine with a hexaketide and subsequent release of the stable tetramic acid precursor, pre-leporin C. Because lepA lacks a designated enoylreductase (ER) domain, the required activity is provided the enoyl reductase lepG. It is possible that the dehydrogenase lepF also participates in production of pre-leporin C. Cytochrome P450 monooxygenase lepH is then required for the ring expansion step to yield leporin C. Leporin C is then presumably further oxidized by the N-hydroxylase lepD to form leporin B. LepI may possess a function in biosynthesis upstream of lepA. Leporin B is further oxidized in the presence of ferric ion to give the leporin B trimer-iron chelate, but whether or not this reaction is catalyzed by an enzyme in the pathway or by ferric ion is not determined yet. The chain is Cytochrome P450 monooxygenase lepD from Aspergillus flavus (strain ATCC 200026 / FGSC A1120 / IAM 13836 / NRRL 3357 / JCM 12722 / SRRC 167).